The primary structure comprises 282 residues: Undecaprenyl-diphosphatase (282 aa).

The next 7 helical transmembrane spans lie at Leu6–Val26, Ser45–Phe65, Leu85–Ile105, Phe112–Val132, Ala200–Met220, His230–Val250, and Tyr262–Phe282.

This sequence belongs to the UppP family.

It localises to the cell inner membrane. The enzyme catalyses di-trans,octa-cis-undecaprenyl diphosphate + H2O = di-trans,octa-cis-undecaprenyl phosphate + phosphate + H(+). Catalyzes the dephosphorylation of undecaprenyl diphosphate (UPP). Confers resistance to bacitracin. In Bordetella avium (strain 197N), this protein is Undecaprenyl-diphosphatase.